Consider the following 100-residue polypeptide: Large ribosomal subunit protein eL30 (100 aa).

It belongs to the eukaryotic ribosomal protein eL30 family.

This is Large ribosomal subunit protein eL30 from Thermococcus sibiricus (strain DSM 12597 / MM 739).